The sequence spans 348 residues: Rhodopsin (348 aa).

Met1 carries the post-translational modification N-acetylmethionine. Residues 1–36 (MNGTEGPNFYVPFSNATGVVRSPFEYPQYYLAEPWQ) lie on the Extracellular side of the membrane. Asn2 and Asn15 each carry an N-linked (GlcNAc...) asparagine glycan. The chain crosses the membrane as a helical span at residues 37–61 (FSMLAAYMFLLIVLGFPINFLTLYV). The Cytoplasmic portion of the chain corresponds to 62 to 73 (TVQHKKLRTPLN). Residues 74 to 96 (YILLNLAVADLFMVLGGFTSTLY) traverse the membrane as a helical segment. Residues 97-110 (TSLHGYFVFGPTGC) lie on the Extracellular side of the membrane. A disulfide bridge connects residues Cys110 and Cys187. The chain crosses the membrane as a helical span at residues 111–133 (NLEGFFATLGGEIALWSLVVLAI). The short motif at 134–136 (ERY) is the 'Ionic lock' involved in activated form stabilization element. Residues 134 to 152 (ERYVVVCKPMSNFRFGENH) are Cytoplasmic-facing. A helical transmembrane segment spans residues 153-173 (AIMGVAFTWVMALACAAPPLA). Residues 174–202 (GWSRYIPEGLQCSCGIDYYTLKPEVNNES) lie on the Extracellular side of the membrane. Position 201 (Glu201) interacts with Zn(2+). Residues 203–224 (FVIYMFVVHFTIPMIIIFFCYG) traverse the membrane as a helical segment. Residues 225 to 252 (QLVFTVKEAAAQQQESATTQKAEKEVTR) are Cytoplasmic-facing. The helical transmembrane segment at 253–274 (MVIIMVIAFLICWVPYASVAFY) threads the bilayer. The Extracellular portion of the chain corresponds to 275-284 (IFTHQGSNFG). Residue Gln279 coordinates Zn(2+). The helical transmembrane segment at 285–309 (PIFMTIPAFFAKSAAIYNPVIYIMM) threads the bilayer. Lys296 carries the N6-(retinylidene)lysine modification. Over 310 to 348 (NKQFRNCMLTTICCGKNPLGDDEASATVSKTETSQVAPA) the chain is Cytoplasmic. Residues Cys322 and Cys323 are each lipidated (S-palmitoyl cysteine). The tract at residues 330-348 (DDEASATVSKTETSQVAPA) is interaction with SAG. At Ser334 the chain carries Phosphoserine. Residue Thr336 is modified to Phosphothreonine. Ser338 is modified (phosphoserine). Phosphothreonine is present on residues Thr340 and Thr342. Residue Ser343 is modified to Phosphoserine.

This sequence belongs to the G-protein coupled receptor 1 family. Opsin subfamily. Homodimer. May form a complex composed of RHO, GRK1 and RCVRN in a Ca(2+)-dependent manner; RCVRN prevents the interaction between GRK1 and RHO. Interacts with GRK1. Interacts (phosphorylated form) with SAG. Interacts with GNAT1. Interacts with GNAT3. SAG and G-proteins compete for a common binding site. Interacts with PRCD; the interaction promotes PRCD stability. Forms a complex with ASAP1 and ARF4. Forms a complex with ASAP1, RAB11A, Rabin8/RAB3IP, ARF4 and RAB11FIP3; the complex regulates Golgi-to-cilia rhodopsin/RHO transport in photoreceptors. In terms of processing, phosphorylated on some or all of the serine and threonine residues present in the C-terminal region. After activation by light, phosphorylated by GRK1 (in vitro). Contains one covalently linked retinal chromophore. Upon light absorption, the covalently bound 11-cis-retinal is converted to all-trans-retinal. After hydrolysis of the Schiff base and release of the covalently bound all-trans-retinal, active rhodopsin is regenerated by binding of a fresh molecule of 11-cis-retinal. In terms of tissue distribution, rod shaped photoreceptor cells which mediate vision in dim light.

The protein localises to the membrane. It is found in the cell projection. It localises to the cilium. Its subcellular location is the photoreceptor outer segment. Functionally, photoreceptor required for image-forming vision at low light intensity. Required for photoreceptor cell viability after birth. Light-induced isomerization of the chromophore 11-cis-retinal to all-trans-retinal triggers a conformational change that activates signaling via G-proteins. Subsequent receptor phosphorylation mediates displacement of the bound G-protein alpha subunit by the arrestin SAG and terminates signaling. The chain is Rhodopsin (RHO) from Homo sapiens (Human).